The sequence spans 246 residues: Phosphonates import ATP-binding protein PhnC (246 aa).

One can recognise an ABC transporter domain in the interval 2–246 (IKFENVSKVY…ILDEVYRKEG (245 aa)). Residue 35 to 42 (GTSGAGKS) participates in ATP binding.

This sequence belongs to the ABC transporter superfamily. Phosphonates importer (TC 3.A.1.9.1) family. In terms of assembly, the complex is composed of two ATP-binding proteins (PhnC), two transmembrane proteins (PhnE) and a solute-binding protein (PhnD).

The protein resides in the cell membrane. The enzyme catalyses phosphonate(out) + ATP + H2O = phosphonate(in) + ADP + phosphate + H(+). In terms of biological role, part of the ABC transporter complex PhnCDE involved in phosphonates import. Responsible for energy coupling to the transport system. In Lactococcus lactis subsp. cremoris (strain SK11), this protein is Phosphonates import ATP-binding protein PhnC.